A 990-amino-acid chain; its full sequence is F-box/LRR-repeat protein 15 (990 aa).

Residues 190–236 form the F-box domain; that stretch reads FEVHIDLTDDLLHMVFSFLNHVDLCRSAMVCRQWRVASAHEDFWRVL. 22 LRR repeats span residues 237–258, 280–303, 317–341, 348–373, 397–423, 441–465, 466–477, 478–503, 519–542, 550–574, 589–612, 614–633, 640–652, 653–678, 734–756, 758–782, 785–809, 813–839, 882–893, 894–914, 915–937, and 949–973; these read NFEN…YPNA, LRNL…ALGE, LGNG…KCRV, CPQL…LLQL, LESL…CANL, LPML…WIAN, SPALEVLELDNC, NLLT…KFTD, CPAL…KQEN, CHSL…IFSD, CESL…GCRA, TSLE…GCDH, QPVA…LGIC, PKLS…VLSE, LPNL…VFKS, IQLK…LYKE, LPAL…LLAC, LTHL…LFDY, FYHLSTLNLSLS, VNLK…LSNC, CSLE…SCNM, and CSSL…KFRT.

The polypeptide is F-box/LRR-repeat protein 15 (FBL15) (Arabidopsis thaliana (Mouse-ear cress)).